A 504-amino-acid chain; its full sequence is tRNA (uracil-5-)-methyltransferase homolog B (504 aa).

Residues 1-16 (MAGLKRRVPLHSLRYF) constitute a mitochondrion transit peptide. S-adenosyl-L-methionine is bound by residues Gln-323, Glu-373, and Asn-423. Cys-451 acts as the Nucleophile in catalysis. Catalysis depends on Glu-497, which acts as the Proton acceptor.

The protein belongs to the class I-like SAM-binding methyltransferase superfamily. RNA M5U methyltransferase family.

The protein resides in the mitochondrion. Its subcellular location is the mitochondrion matrix. It catalyses the reaction uridine(54) in tRNA + S-adenosyl-L-methionine = 5-methyluridine(54) in tRNA + S-adenosyl-L-homocysteine + H(+). The enzyme catalyses a uridine in 12S rRNA + S-adenosyl-L-methionine = a 5-methyluridine in 12S rRNA + S-adenosyl-L-homocysteine + H(+). Mitochondrial S-adenosyl-L-methionine-dependent methyltransferase that catalyzes the formation of 5-methyl-uridine in tRNAs and 12S rRNA. Catalyzes the methylation of uridine at position 54 (m5U54) in all tRNAs. Specifically methylates the uridine in position 429 of 12S rRNA (m5U429). Does not affect RNA stability or mitochondrial translation. The protein is tRNA (uracil-5-)-methyltransferase homolog B of Homo sapiens (Human).